The primary structure comprises 179 residues: ATP synthase subunit delta (179 aa).

This sequence belongs to the ATPase delta chain family. As to quaternary structure, F-type ATPases have 2 components, F(1) - the catalytic core - and F(0) - the membrane proton channel. F(1) has five subunits: alpha(3), beta(3), gamma(1), delta(1), epsilon(1). F(0) has three main subunits: a(1), b(2) and c(10-14). The alpha and beta chains form an alternating ring which encloses part of the gamma chain. F(1) is attached to F(0) by a central stalk formed by the gamma and epsilon chains, while a peripheral stalk is formed by the delta and b chains.

It localises to the cell membrane. In terms of biological role, f(1)F(0) ATP synthase produces ATP from ADP in the presence of a proton or sodium gradient. F-type ATPases consist of two structural domains, F(1) containing the extramembraneous catalytic core and F(0) containing the membrane proton channel, linked together by a central stalk and a peripheral stalk. During catalysis, ATP synthesis in the catalytic domain of F(1) is coupled via a rotary mechanism of the central stalk subunits to proton translocation. Its function is as follows. This protein is part of the stalk that links CF(0) to CF(1). It either transmits conformational changes from CF(0) to CF(1) or is implicated in proton conduction. The polypeptide is ATP synthase subunit delta (Listeria monocytogenes serovar 1/2a (strain ATCC BAA-679 / EGD-e)).